A 2065-amino-acid chain; its full sequence is WD repeat-containing protein 81 (2065 aa).

Residues 325 to 617 (LCRNCQDELK…EPPHFGRVNV (293 aa)) enclose the BEACH domain. 4 disordered regions span residues 1082 to 1111 (EEEE…GGSG), 1156 to 1230 (TTVG…VEDR), 1271 to 1290 (GEKN…DSEE), and 1595 to 1642 (ASPG…GGDI). A compositionally biased stretch (gly residues) spans 1101 to 1111 (KVGGGSGGGSG). Positions 1156 to 1169 (TTVGTKQQNQSTAN) are enriched in polar residues. Over residues 1213-1228 (DGEDGGELEDEEETVE) the composition is skewed to acidic residues. The segment covering 1624-1637 (SRSPFPAPSSTSTP) has biased composition (low complexity). 5 WD repeats span residues 1767–1806 (GHSG…DGTR), 1813–1853 (TYTE…NIRC), 1906–1945 (LSAG…VLRG), 1948–1986 (GHEG…PLHQ), and 2035–2065 (NFRG…RLLA).

Belongs to the WD repeat WDR81 family. As to expression, widely expressed.

The protein localises to the early endosome membrane. It is found in the late endosome membrane. It localises to the lysosome membrane. The protein resides in the cytoplasmic vesicle. Its subcellular location is the autophagosome membrane. The protein localises to the mitochondrion. It is found in the cytoplasm. It localises to the cytosol. Its function is as follows. Functions as a negative regulator of the PI3 kinase/PI3K activity associated with endosomal membranes. By modifying the phosphatidylinositol 3-phosphate/PtdInsP3 content of endosomal membranes may regulate endosome fusion, recycling, sorting and early to late endosome transport. May also play a role in aggrephagy, the macroautophagic degradation of ubiquitinated protein aggregates. May also be involved in maintenance of normal mitochondrial structure and organization. This chain is WD repeat-containing protein 81 (wdr81), found in Danio rerio (Zebrafish).